The chain runs to 204 residues: MTKYTFKPKDFKAFNVEGLDARMEALNEYIRPQLRELGEYFSDFFTSQTGETFYPHVAKHARRSVNPPKDTWVAFATNKRGYKMLPHFQIGMFEDQLFVMFGIMHEAKDKATRAKVFERKFKAIQQLPDDYRVCLDHMKPDKPFIKDLTDDDLIEAIQRAINVKKGEFFIARAITPQDKRLKSDKAFIAFLEETFDQFLPFYSA.

It belongs to the UPF0637 family.

This chain is UPF0637 protein USA300HOU_1046.1, found in Staphylococcus aureus (strain USA300 / TCH1516).